We begin with the raw amino-acid sequence, 244 residues long: EEF1A lysine methyltransferase 2 (244 aa).

The segment at methionine 1–phenylalanine 27 is disordered. Serine 21 carries the phosphoserine modification.

The protein belongs to the class I-like SAM-binding methyltransferase superfamily. EFM4 family.

It is found in the cytoplasm. Its subcellular location is the nucleus. It catalyses the reaction L-lysyl-[protein] + 3 S-adenosyl-L-methionine = N(6),N(6),N(6)-trimethyl-L-lysyl-[protein] + 3 S-adenosyl-L-homocysteine + 3 H(+). In terms of biological role, protein-lysine methyltransferase that selectively catalyzes the trimethylation of EEF1A at 'Lys-318'. This is EEF1A lysine methyltransferase 2 from Mus musculus (Mouse).